The sequence spans 67 residues: Sperm protamine P1 (67 aa).

The interval 1 to 67 is disordered; that stretch reads MASYRNSRSR…RRRKRNNENK (67 aa). 2 stretches are compositionally biased toward basic residues: residues 7-25 and 34-67; these read SRSR…RSRV and RSSR…NENK.

It belongs to the protamine P1 family. In terms of tissue distribution, testis.

The protein localises to the nucleus. Its subcellular location is the chromosome. Protamines substitute for histones in the chromatin of sperm during the haploid phase of spermatogenesis. They compact sperm DNA into a highly condensed, stable and inactive complex. The protein is Sperm protamine P1 (PRM1) of Isoodon macrourus (Short-nosed bandicoot).